The primary structure comprises 890 residues: Alanine--tRNA ligase (890 aa).

Residues histidine 572, histidine 576, cysteine 674, and histidine 678 each contribute to the Zn(2+) site.

It belongs to the class-II aminoacyl-tRNA synthetase family. The cofactor is Zn(2+).

Its subcellular location is the cytoplasm. It carries out the reaction tRNA(Ala) + L-alanine + ATP = L-alanyl-tRNA(Ala) + AMP + diphosphate. Catalyzes the attachment of alanine to tRNA(Ala) in a two-step reaction: alanine is first activated by ATP to form Ala-AMP and then transferred to the acceptor end of tRNA(Ala). Also edits incorrectly charged Ser-tRNA(Ala) and Gly-tRNA(Ala) via its editing domain. The chain is Alanine--tRNA ligase from Prochlorococcus marinus (strain MIT 9211).